A 467-amino-acid chain; its full sequence is E3 ubiquitin-protein ligase IE61 (467 aa).

An RING-type zinc finger spans residues 19–58; sequence CTICMSTVSDLGKTMPCLHDFCFVCIRAWTSTSVQCPLCR. Disordered stretches follow at residues 101–171, 205–238, 344–364, and 413–467; these read GDVI…GVTK, QQPRTGGQDYRDRPVSVGINQDPRTMDRLPFRAT, IVRPETTSTGETSRGDERDTR, and DSAC…MKKS. The segment covering 116–143 has biased composition (polar residues); sequence ESIQQPTSRSSREPIQSPNPGPLQSSAR. The segment covering 149–161 has biased composition (low complexity); the sequence is SPSDSQQDSIQPP. Over residues 162–171 the composition is skewed to polar residues; that stretch reads TRDSSPGVTK. Basic and acidic residues predominate over residues 228-238; that stretch reads RTMDRLPFRAT. 2 stretches are compositionally biased toward low complexity: residues 429 to 443 and 450 to 459; these read GESNTPSTSGSTSGS and KSSAGKAGKG.

As to quaternary structure, interacts with host BTRC; this interaction seems to inactivate SCF-mediated protein degradation in general. Auto-ubiquitinated.

The catalysed reaction is S-ubiquitinyl-[E2 ubiquitin-conjugating enzyme]-L-cysteine + [acceptor protein]-L-lysine = [E2 ubiquitin-conjugating enzyme]-L-cysteine + N(6)-ubiquitinyl-[acceptor protein]-L-lysine.. In terms of biological role, RING-finger E3 ubiquitin ligase that degrades host SP100, one of the major components of ND10 nuclear bodies, thereby disrupting the organization of these bodies. Also plays a role in the inhibition of host NF-kappa-B pathway by blocking the SCF(BTRC)-mediated addition of ubiquitin chains to host I-kappa-B-alpha/NFKBIA, thereby interfering with its degradation. This Varicella-zoster virus (strain Dumas) (HHV-3) protein is E3 ubiquitin-protein ligase IE61 (61).